A 945-amino-acid polypeptide reads, in one-letter code: MSNKKADSKPQAKYPVNLLDTPFPMRGDLPKREPQWVKEWEERGIYEKIRAASAGRPKFILHDGPPYANGDIHLGHAVNKILKDIVVKSRNMAGFDAPYVPGWDCHGMPIEIQIEKQFGKSLPAAEVMSKARAYATEQIEKQKVGFKRLGVLGDWANPYKTMNFVNEAEELRALGKIIEKGYVYRGLKPVNWCFDCGSALAEAEVEYKDRTDPTIDVMFAFAEPEKTAQAFGLPALPRAEGGIVIWTTTPWTIPANQALNLHPEIVYALVDTERGLLIIAEERVEACMTDFKLTGRVVATAPGVKLAGLRFHHPLASAHPGYKRTAPVYLGDYVTTDTGTGVVHSSPAYGIEDFVSCKAHGMTDSDFINPVMGDGRYIESLPLFGGLSIWDANPKIVEALNAAGSLLRSEKYTHSYMHCWRHKTPIIYRATSQWFAGMDVTPRDGGKTLRETALEGVDATAFYPSWGKQRLFSMIANRPDWTLSRQRQWGVPMAFFVHKETGELHPRTLELLEEVAKRVEQSGIEAWQTLDPRELIGDDANLYEKNRDTLDVWFDSGTTHWHVLRGSHKDQLQFPADLYLEGSDQHRGWFHSSLLTASMIDGRAPYKGLLTHGFTVDGEGRKMSKSLGNGIDPHEVANRLGAEIIRLWIASTDYSGELAISEEILKRVTEGYRRIRNTLRFLLANLSDFDFAQHAVPVDEWLEIDRYAVAFSQQLQTELLGHYEKYEFHPVVAKLQTYCSEDLGGFYLDVLKDRLYTSAADSRARRSAQTALYHLTHGLLRVLAPFLSFTAEEAWKVFQPASDTIYTETYYAYPEVAGSAALIEKWALLRDVRGNVTKALEEARTANRIGSSLQAEVAVHASGARYDALTSLGDDLKFVLITSAATVVKVDDEAQESVDVAASKYQKCERCWHYREDVGAHADHPTLCGRCFSNLFENGEIRSAA.

The 'HIGH' region motif lies at 66–76 (PYANGDIHLGH). Glutamate 581 is an L-isoleucyl-5'-AMP binding site. A 'KMSKS' region motif is present at residues 622 to 626 (KMSKS). Lysine 625 provides a ligand contact to ATP. Cysteine 908, cysteine 911, cysteine 928, and cysteine 931 together coordinate Zn(2+).

The protein belongs to the class-I aminoacyl-tRNA synthetase family. IleS type 1 subfamily. In terms of assembly, monomer. Zn(2+) serves as cofactor.

It localises to the cytoplasm. The enzyme catalyses tRNA(Ile) + L-isoleucine + ATP = L-isoleucyl-tRNA(Ile) + AMP + diphosphate. Functionally, catalyzes the attachment of isoleucine to tRNA(Ile). As IleRS can inadvertently accommodate and process structurally similar amino acids such as valine, to avoid such errors it has two additional distinct tRNA(Ile)-dependent editing activities. One activity is designated as 'pretransfer' editing and involves the hydrolysis of activated Val-AMP. The other activity is designated 'posttransfer' editing and involves deacylation of mischarged Val-tRNA(Ile). The chain is Isoleucine--tRNA ligase from Burkholderia lata (strain ATCC 17760 / DSM 23089 / LMG 22485 / NCIMB 9086 / R18194 / 383).